The sequence spans 461 residues: tRNA modification GTPase MnmE (461 aa).

Residues Arg-23, Glu-88, and Arg-127 each contribute to the (6S)-5-formyl-5,6,7,8-tetrahydrofolate site. The 160-residue stretch at 223–382 (GLNTVIVGKP…VEEALVEIVY (160 aa)) folds into the TrmE-type G domain. Asn-233 contributes to the K(+) binding site. GTP is bound by residues 233–238 (NVGKSS), 252–258 (TEVPGTT), and 277–280 (DTAG). Ser-237 contributes to the Mg(2+) binding site. K(+) contacts are provided by Thr-252, Val-254, and Thr-257. Residue Thr-258 coordinates Mg(2+). Residue Lys-461 participates in (6S)-5-formyl-5,6,7,8-tetrahydrofolate binding.

The protein belongs to the TRAFAC class TrmE-Era-EngA-EngB-Septin-like GTPase superfamily. TrmE GTPase family. In terms of assembly, homodimer. Heterotetramer of two MnmE and two MnmG subunits. Requires K(+) as cofactor.

The protein localises to the cytoplasm. Functionally, exhibits a very high intrinsic GTPase hydrolysis rate. Involved in the addition of a carboxymethylaminomethyl (cmnm) group at the wobble position (U34) of certain tRNAs, forming tRNA-cmnm(5)s(2)U34. This is tRNA modification GTPase MnmE from Alkaliphilus metalliredigens (strain QYMF).